A 252-amino-acid chain; its full sequence is Mitochondrial intermembrane space import and assembly protein 40 (252 aa).

The N-terminal 31 residues, methionine 1–proline 31, are a transit peptide targeting the mitochondrion. Over serine 32 to lysine 37 the chain is Mitochondrial matrix. A helical; Signal-anchor for type II membrane protein transmembrane segment spans residues leucine 38–serine 54. Topologically, residues glutamine 55–aspartate 252 are mitochondrial intermembrane. The span at arginine 90–serine 123 shows a compositional bias: basic and acidic residues. A disordered region spans residues arginine 90–proline 143. 3 disulfides stabilise this stretch: cysteine 152–cysteine 154, cysteine 163–cysteine 196, and cysteine 173–cysteine 186. A CHCH domain is found at histidine 160–tyrosine 204. 2 consecutive short sequence motifs (cx9C motif) follow at residues cysteine 163 to cysteine 173 and cysteine 186 to cysteine 196. Residues glutamate 230–aspartate 252 form a disordered region. The span at glycine 239 to aspartate 252 shows a compositional bias: basic and acidic residues.

In terms of assembly, monomer. The cofactor is Cu(2+). Zn(2+) is required as a cofactor.

It is found in the mitochondrion inner membrane. Required for the import and folding of small cysteine-containing proteins (small Tim) in the mitochondrial intermembrane space (IMS). Forms a redox cycle with ERV1 that involves a disulfide relay system. Precursor proteins to be imported into the IMS are translocated in their reduced form into the mitochondria. The oxidized form of MIA40 forms a transient intermolecular disulfide bridge with the reduced precursor protein, resulting in oxidation of the precursor protein that now contains an intramolecular disulfide bond and is able to undergo folding in the IMS. This chain is Mitochondrial intermembrane space import and assembly protein 40 (MIA40), found in Candida albicans (strain SC5314 / ATCC MYA-2876) (Yeast).